The following is a 397-amino-acid chain: Phosphoglycerate kinase (397 aa).

Substrate is bound by residues 22-24 (DLN), arginine 37, 60-63 (HFGR), arginine 119, and arginine 152. ATP contacts are provided by residues lysine 202, glutamate 324, and 354–357 (GGDT).

It belongs to the phosphoglycerate kinase family. As to quaternary structure, monomer.

The protein resides in the cytoplasm. The catalysed reaction is (2R)-3-phosphoglycerate + ATP = (2R)-3-phospho-glyceroyl phosphate + ADP. It functions in the pathway carbohydrate degradation; glycolysis; pyruvate from D-glyceraldehyde 3-phosphate: step 2/5. This is Phosphoglycerate kinase (pgk) from Zymomonas mobilis subsp. mobilis (strain ATCC 31821 / ZM4 / CP4).